The following is a 367-amino-acid chain: DNA replication and repair protein RecF (367 aa).

30–37 (GANGSGKT) is a binding site for ATP.

It belongs to the RecF family.

The protein localises to the cytoplasm. The RecF protein is involved in DNA metabolism; it is required for DNA replication and normal SOS inducibility. RecF binds preferentially to single-stranded, linear DNA. It also seems to bind ATP. The chain is DNA replication and repair protein RecF from Pseudomonas fluorescens (strain ATCC BAA-477 / NRRL B-23932 / Pf-5).